The primary structure comprises 101 residues: Urease subunit beta (101 aa).

The protein belongs to the urease beta subunit family. In terms of assembly, heterotrimer of UreA (gamma), UreB (beta) and UreC (alpha) subunits. Three heterotrimers associate to form the active enzyme.

The protein resides in the cytoplasm. The catalysed reaction is urea + 2 H2O + H(+) = hydrogencarbonate + 2 NH4(+). Its pathway is nitrogen metabolism; urea degradation; CO(2) and NH(3) from urea (urease route): step 1/1. This chain is Urease subunit beta, found in Rhizobium meliloti (strain 1021) (Ensifer meliloti).